We begin with the raw amino-acid sequence, 437 residues long: Minor fimbrial subunit HifE (437 aa).

An N-terminal signal peptide occupies residues M1–A30.

This sequence belongs to the fimbrial protein family.

It is found in the fimbrium. In terms of biological role, may be a minor structural protein required for pilus biogenesis. May be the adhesive component in the pili. In Haemophilus influenzae, this protein is Minor fimbrial subunit HifE (hifE).